The sequence spans 181 residues: Immunity-related GTPase family M protein (181 aa).

An IRG-type G domain is found at 32 to 181; the sequence is TPVNITMAGD…NLQKERVCEY (150 aa). GTP contacts are provided by residues 41–48, 66–70, and 147–149; these read DSGNGMST, TELVK, and KLD.

Belongs to the TRAFAC class dynamin-like GTPase superfamily. IRG family. As to quaternary structure, interacts with ULK1; promoting the coassembly of ULK1 and BECN1. Interacts with BECN1; enhancing BECN1-interacting partners and influencing the composition of the BECN1 complex. Interacts with ATG16L1. Interacts with NOD2; promoting IRGM 'Lys-63'-linked polyubiquitination, which is required for interactions with the core autophagy factors. Interacts with STX17; promoting STX17 recruitment to autophagosomes. Interacts with ATG8 proteins (GABARAP, GABARAPL1, GABARAPL2, MAP1LC3A, MAP1LC3B and MAP1LC3C); promoting STX17 recruitment to autophagosomes. Interacts with TFEB; promoting association between TFEB and PPP3CB and TFEB dephosphorylation. Interacts with PPP3CB; promoting association between TFEB and PPP3CB and TFEB dephosphorylation. Interacts with NLRP3; preventing NLRP3 inflammasome assembly and promoting SQSTM1/p62-dependent autophagic degradation of NLRP3. Interacts with CGAS; promoting SQSTM1/p62-dependent autophagic degradation of CGAS. Interacts with RIGI/RIG-I; promoting SQSTM1/p62-dependent autophagic degradation of RIGI/RIG-I. Interacts with NOD1; promoting SQSTM1/p62-dependent autophagic degradation of RIGI/RIG-I. Interacts with NOD2; promoting SQSTM1/p62-dependent autophagic degradation of RIGI/RIG-I. Interacts with RIPK2; promoting SQSTM1/p62-dependent autophagic degradation of RIGI/RIG-I. In terms of processing, ubiquitinated via 'Lys-63'-linked polyubiquitination in a NOD2-dependent process. 'Lys-63'-linked polyubiquitination is required for interactions with the core autophagy factors. As to expression, widely expressed (at protein level). Expressed in several tissues including colon, small bowel and peripheral blood leukocytes.

It is found in the golgi apparatus membrane. Its subcellular location is the cell membrane. The protein localises to the cytoplasmic vesicle. It localises to the phagosome membrane. The protein resides in the autophagosome membrane. It is found in the lysosome membrane. Its subcellular location is the late endosome membrane. The protein localises to the mitochondrion membrane. It localises to the cell projection. The protein resides in the phagocytic cup. It is found in the mitochondrion. The enzyme catalyses GTP + H2O = GDP + phosphate + H(+). Functionally, immunity-related GTPase that plays important roles in innate immunity and inflammatory response. Acts as a dynamin-like protein that binds to intracellular membranes and promotes remodeling and trafficking of those membranes. Required for clearance of acute protozoan and bacterial infections by interacting with autophagy and lysosome regulatory proteins, thereby promoting the fusion of phagosomes with lysosomes for efficient degradation of cargo including microbes. Regulates selective autophagy, including xenophagy and mitophagy, both directly and indirectly. Directly regulates autophagy by acting as a molecular adapter that promotes the coassembly of the core autophagy machinery to mediate antimicrobial defense: IRGM (1) activates AMPK, which in turn phosphorylates ULK1 and BECN1 to induce autophagy, (2) promotes the coassembly of ULK1 and BECN1, enhancing BECN1-interacting partners and (3) influences the composition of the BECN1 complex, by competing with the negative regulators BCL2 and RUBCN, to trigger autophagy. Also activates autophagy by promoting recruitment of STX17 to autophagosomes. In collaboration with ATG8 proteins, regulate lysosomal biogenesis, a fundamental process for any autophagic pathway, by promoting TFEB dephosphorylation. Also modulates autophagy by assisting with autophagosome formation and preventing lysosomal deacidification. While activating autophagy, acts as a key negative regulator of the inflammatory and interferon responses both by (1) promoting mitophagy and (2) mediating autophagy-dependent degradation of effectors of the inflammatory response. Promotes degradation of damaged and IFNG/IFN-gamma-stressed mitochondria via mitophagy, preventing cytosolic release of ligands that activate inflammation. Acts as a suppressor of inflammation by promoting recruitment of inflammation effectors, such as CGAS, RIGI/RIG-I and NLRP3, to autophagosome membranes, leading to their SQSTM1/p62-dependent autophagic degradation. Also directly inhibits assembly of the NLRP3 inflammasome by preventing the association between NLRP3 and PYCARD. Acts as a negative regulator of antiviral innate immune response by suppressing the RIPK2-dependent pro-inflammatory response: mediates recruitment of RIPosomes, composed of RIPK2 and NOD1 or NOD2, to autophagosome membranes, promoting their SQSTM1/p62-dependent autophagic degradation. Acts as a positive regulator of mitophagy in response to intracellular mycobacteria infection: specifically binds cardiolipin, leading to its translocation to mitochondria, where it promotes affected mitochondrial fission and mitophagy. In terms of biological role, (Microbial infection) Following infection by hepatitis C virus (HCV), promotes HCV-triggered membrane remodeling, leading to autophagy and Golgi fragmentation, a step required for HCV replication. The protein is Immunity-related GTPase family M protein of Homo sapiens (Human).